Consider the following 319-residue polypeptide: MPEKTAVLLLQMGGPDSIEAVEPFLLNLFSDREIIKIGPAFLQPFIARRICRKRAPKVEGYYSQIGGKSPIRELTEAQAQALEEKLGGNFRCFVAMRYWKPTTIDALAAIKREGISRVIALSLYPHYSRATTGSSINELKRVLGEAGARFEVSYVDRFYDHPLYIAALAAKIEEGLAQFSNRSEVELVFSAHSLPQSFIDEGDPYLSHILETVRLVMERLGNVNYHLAFQSRAGPVKWLEPSTEEMIQKLAKGGCKELLMVPLSFVSDHIETLYEIDIQYAEEAKGLGIEHFRRSPSLNTSPLFIDCLANLVHKTVSSE.

Fe cation-binding residues include His-192 and Glu-271.

Belongs to the ferrochelatase family.

It is found in the cytoplasm. The enzyme catalyses heme b + 2 H(+) = protoporphyrin IX + Fe(2+). It participates in porphyrin-containing compound metabolism; protoheme biosynthesis; protoheme from protoporphyrin-IX: step 1/1. Its function is as follows. Catalyzes the ferrous insertion into protoporphyrin IX. In Geotalea uraniireducens (strain Rf4) (Geobacter uraniireducens), this protein is Ferrochelatase.